Here is a 361-residue protein sequence, read N- to C-terminus: DNA polymerase IV 3 (361 aa).

Residues 12-192 (IIHVDMDAFY…LPVNKFHGVG (181 aa)) form the UmuC domain. Residues D16 and D110 each contribute to the Mg(2+) site. The active site involves E111.

The protein belongs to the DNA polymerase type-Y family. As to quaternary structure, monomer. It depends on Mg(2+) as a cofactor.

The protein localises to the cytoplasm. It carries out the reaction DNA(n) + a 2'-deoxyribonucleoside 5'-triphosphate = DNA(n+1) + diphosphate. Poorly processive, error-prone DNA polymerase involved in untargeted mutagenesis. Copies undamaged DNA at stalled replication forks, which arise in vivo from mismatched or misaligned primer ends. These misaligned primers can be extended by PolIV. Exhibits no 3'-5' exonuclease (proofreading) activity. May be involved in translesional synthesis, in conjunction with the beta clamp from PolIII. The chain is DNA polymerase IV 3 (dinB3) from Mesorhizobium japonicum (strain LMG 29417 / CECT 9101 / MAFF 303099) (Mesorhizobium loti (strain MAFF 303099)).